The chain runs to 850 residues: Transforming growth factor beta receptor type 3 (850 aa).

The first 22 residues, 1–22, serve as a signal peptide directing secretion; it reads MAVTSHHMVPVFVLMSACLATA. Residues 23-785 are Extracellular-facing; it reads GPEPSTRCEL…QIFHGLDTLT (763 aa). Residues Cys54 and Cys199 are joined by a disulfide bond. 2 N-linked (GlcNAc...) asparagine glycosylation sites follow: Asn143 and Asn491. One can recognise a ZP domain in the interval 454-728; sequence KCDNEKMVVA…PKCVTPDDAC (275 aa). Residues 528–557 are disordered; the sequence is SPGDSSGWPDGYEDLESGDNGFPGDTDEGE. Residues Ser533 and Ser544 are each glycosylated (O-linked (Xyl...) (glycosaminoglycan) serine). Asn570, Asn589, and Asn696 each carry an N-linked (GlcNAc...) asparagine glycan. Intrachain disulfides connect Cys638–Cys704, Cys659–Cys728, and Cys709–Cys721. Residues 735 to 749 form an interaction with TGF-beta ligand region; it reads MIWTMMQNKKTFTKP. The chain crosses the membrane as a helical span at residues 786–808; that stretch reads VMGIAFAAFVIGALLTGALWYIY. At 809 to 850 the chain is on the cytoplasmic side; the sequence is SHTGETARRQQVPTSPPASENSSAAHSIGSTQSTPCSSSSTA. Positions 817–833 are enriched in polar residues; sequence RQQVPTSPPASENSSAA. A disordered region spans residues 817 to 850; that stretch reads RQQVPTSPPASENSSAAHSIGSTQSTPCSSSSTA. Over residues 835-850 the composition is skewed to low complexity; it reads SIGSTQSTPCSSSSTA. Residue Thr839 is modified to Phosphothreonine.

Forms homodimers and homooligomers. Interacts with DYNLT4. Interacts with integrin ITGA5:ITGB1; this interaction promotes the internalization and trafficking of ITGA5:ITGB1 into endocytic vesicles. Interacts with TGFB1, BMP2, BMP5, BMP7 or GDF5 and inhibin A via the ligand binding domains. Interacts with ALK3/BMPR1A; this interaction results in the cell surface retention of BMPR1A. Interacts with ALK6/BMPR1B; this interaction enhances BMPR1B-mediated stimulation of the BMP signaling pathway. Interacts with the scaffolding protein beta-arrestin2/ARRB2; this interaction mediates internalization of TGFBR3 and thus regulates migration, actin cytoskeleton and activation of CDC42. Extensively modified by glycosaminoglycan groups (GAG). In terms of processing, phosphorylated in the cytoplasmic domain by the type II receptor TGFBR2 at THR-839 to mediate recruitment of ARRB2 and subsequent internalization of TGFBR2 and TGFBR3.

It is found in the cell membrane. The protein resides in the secreted. It localises to the extracellular space. Its subcellular location is the extracellular matrix. Functionally, cell surface receptor that regulates diverse cellular processes including cell proliferation, differentiation, migration, and apoptosis. Initiates BMP, inhibin, and TGF-beta signaling pathways by interacting with different ligands including TGFB1, BMP2, BMP5, BMP7 or GDF5. Alternatively, acts as a cell surface coreceptor for BMP ligands, serving to enhance ligand binding by differentially regulating BMPR1A/ALK3 and BMPR1B/ALK6 receptor trafficking. Promotes epithelial cell adhesion, focal adhesion formation and integrin signaling during epithelial cell spreading on fibronectin. By interacting with the scaffolding protein beta-arrestin2/ARRB2, regulates migration or actin cytoskeleton and promotes the activation of CDC42 as well as the inhibition of NF-kappa-B. In gonadotrope cells, acts as an inhibin A coreceptor and regulates follicle-stimulating hormone (FSH) levels and female fertility. Plays a role in the inhibition of directed and random cell migration in epithelial cells by altering the actin cytoskeletal organization. Participates in epithelial-mesenchymal transformation (EMT) upon binding to BMP2 or TGFB2, by activating the PAR6/SMURF1/RHOA pathway. The chain is Transforming growth factor beta receptor type 3 (Tgfbr3) from Mus musculus (Mouse).